The sequence spans 158 residues: Cyclic pyranopterin monophosphate synthase (158 aa).

Substrate contacts are provided by residues 75 to 77 (LCH) and 113 to 114 (ME). D128 is a catalytic residue.

It belongs to the MoaC family. As to quaternary structure, homohexamer; trimer of dimers.

The catalysed reaction is (8S)-3',8-cyclo-7,8-dihydroguanosine 5'-triphosphate = cyclic pyranopterin phosphate + diphosphate. It participates in cofactor biosynthesis; molybdopterin biosynthesis. Catalyzes the conversion of (8S)-3',8-cyclo-7,8-dihydroguanosine 5'-triphosphate to cyclic pyranopterin monophosphate (cPMP). This is Cyclic pyranopterin monophosphate synthase from Vibrio campbellii (strain ATCC BAA-1116).